Consider the following 616-residue polypeptide: E3 ubiquitin-protein ligase DTX4 (616 aa).

WWE domains lie at 1 to 78 and 79 to 155; these read MLLA…PVRR and NYYD…RVRR. Disordered stretches follow at residues 223–254 and 355–387; these read VGKLPQPPGPGAKPLDTTGTIRGPGKTAPSQV and PPPVSKSEIKSIPGVSNTSRKTTKKQAKKGKTP. The span at 375 to 384 shows a compositional bias: basic residues; it reads KTTKKQAKKG. The segment at 406 to 465 adopts an RING-type; atypical zinc-finger fold; that stretch reads CTICMERLTAPSGYKGPQPTVKPDLVGKLSRCGHIYHIYCLVAMYNNGNKDGSLQCPTCK.

Belongs to the Deltex family. As to quaternary structure, interacts with NLRP4. As to expression, expressed in brain, testis, embryonic fibroblasts and thymocytes.

It localises to the cytoplasm. It carries out the reaction S-ubiquitinyl-[E2 ubiquitin-conjugating enzyme]-L-cysteine + [acceptor protein]-L-lysine = [E2 ubiquitin-conjugating enzyme]-L-cysteine + N(6)-ubiquitinyl-[acceptor protein]-L-lysine.. It participates in protein modification; protein ubiquitination. In terms of biological role, functions as a ubiquitin ligase protein in vivo, mediating 'Lys48'-linked polyubiquitination and promoting degradation of TBK1, targeting to TBK1 requires interaction with NLRP4. Regulator of Notch signaling, a signaling pathway involved in cell-cell communications that regulates a broad spectrum of cell-fate determinations. The protein is E3 ubiquitin-protein ligase DTX4 (Dtx4) of Mus musculus (Mouse).